Reading from the N-terminus, the 739-residue chain is Disintegrin and metalloproteinase domain-containing protein 18 (739 aa).

An N-terminal signal peptide occupies residues 1 to 16 (MFLLLALLTELGRLQA). Positions 17 to 184 (HEGSEGIFLH…IKNLSKLLPQ (168 aa)) are excised as a propeptide. Asn-36, Asn-76, Asn-122, Asn-149, Asn-156, Asn-177, and Asn-294 each carry an N-linked (GlcNAc...) asparagine glycan. Topologically, residues 177-687 (NLSKLLPQYL…EKGYNTHWNN (511 aa)) are extracellular. The 198-residue stretch at 184 to 381 (QYLEIYIIVE…FETKCLQKLS (198 aa)) folds into the Peptidase M12B domain. 4 disulfide bridges follow: Cys-293–Cys-376, Cys-335–Cys-360, Cys-337–Cys-342, and Cys-450–Cys-471. Residues Asn-359, Asn-465, Asn-561, Asn-611, and Asn-625 are each glycosylated (N-linked (GlcNAc...) asparagine). A Disintegrin domain is found at 390–479 (QPVCGNGILE…NCVPDTYALN (90 aa)). The 35-residue stretch at 620 to 654 (MGYNCNATTKCKGKGICNNFGNCQCFPGHRPPDCK) folds into the EGF-like domain. 3 disulfide bridges follow: Cys-624-Cys-636, Cys-630-Cys-642, and Cys-644-Cys-653. The helical transmembrane segment at 688–708 (WFILSFCIFLPFFIVFTTVIF) threads the bilayer. Residues 709–739 (KRNEISKSCNRENAEYNRNSSVVSESDDVGH) lie on the Cytoplasmic side of the membrane.

In terms of processing, the prodomain and the metalloprotease-like domain are cleaved during the epididymal maturation of the spermatozoa. Expressed specifically in testis.

It is found in the membrane. Functionally, sperm surface membrane protein that may be involved in spermatogenesis and fertilization. This is a non catalytic metalloprotease-like protein. This Homo sapiens (Human) protein is Disintegrin and metalloproteinase domain-containing protein 18 (ADAM18).